A 551-amino-acid chain; its full sequence is Nose resistant to fluoxetine protein 5 (551 aa).

The first 20 residues, 1-20 (MSRNFHIFFLLVSIIQVGNS), serve as a signal peptide directing secretion. A disulfide bond links cysteine 151 and cysteine 232. The tract at residues 241-265 (EDSEQEEGNVETTVAPTPDDDNSTL) is disordered.

Belongs to the BPI/LBP/Plunc superfamily. BPI/LBP family. As to quaternary structure, interacts with ttr-52. Expressed in the body wall muscle cells and detected at the basal surface of pharyngeal cells and basal-lateral membranes of the intestine.

It localises to the secreted. In terms of biological role, plays a role in the uptake of a range of molecules including phosphatidylserine, lipids and xenobiotic compounds from the intestine to surrounding tissues. Possesses lipid transfer activity. Mediates transport of lipids from intestine to reproductive tract. Binds phosphatidylserine. Plays a role in efficient clearance of cell corpses by mediating phosphatidylserine appearance on phagocytic cells, thus promoting phagocytic engulfment of apoptotic cells. Vital for embryonic development. This chain is Nose resistant to fluoxetine protein 5, found in Caenorhabditis elegans.